The sequence spans 176 residues: L-2,4-diaminobutyric acid acetyltransferase (176 aa).

In terms of domain architecture, N-acetyltransferase spans 16 to 171 (LSIDAPRVED…THLPEVLYRI (156 aa)).

The protein belongs to the acetyltransferase family. EctA subfamily.

The enzyme catalyses L-2,4-diaminobutanoate + acetyl-CoA = (2S)-4-acetamido-2-aminobutanoate + CoA + H(+). The protein operates within amine and polyamine biosynthesis; ectoine biosynthesis; L-ectoine from L-aspartate 4-semialdehyde: step 2/3. In terms of biological role, catalyzes the acetylation of L-2,4-diaminobutyrate (DABA) to gamma-N-acetyl-alpha,gamma-diaminobutyric acid (ADABA) with acetyl coenzyme A. This Streptomyces anulatus (Streptomyces chrysomallus) protein is L-2,4-diaminobutyric acid acetyltransferase (ectA).